The sequence spans 143 residues: Putative complexin-1 (143 aa).

A disordered region spans residues 16 to 72 (EVTGGLGMKDDGGEKTETGEDPEVIAARLEQEERRKEKHRKMENEREKMRQGIRDKY). Composition is skewed to basic and acidic residues over residues 23 to 33 (MKDDGGEKTET) and 44 to 72 (LEQEERRKEKHRKMENEREKMRQGIRDKY). The stretch at 40–71 (IAARLEQEERRKEKHRKMENEREKMRQGIRDK) forms a coiled coil.

This sequence belongs to the complexin/synaphin family.

The protein localises to the cytoplasm. Its subcellular location is the cytosol. Its function is as follows. Positively regulates a late step in synaptic vesicle exocytosis. This chain is Putative complexin-1 (cpx-1), found in Caenorhabditis elegans.